A 130-amino-acid polypeptide reads, in one-letter code: Small ribosomal subunit protein uS9 (130 aa).

A disordered region spans residues 107–130 (DARMKERKKPGLKKARKASQFSKR). The span at 111–130 (KERKKPGLKKARKASQFSKR) shows a compositional bias: basic residues.

It belongs to the universal ribosomal protein uS9 family.

In Ligilactobacillus salivarius (strain UCC118) (Lactobacillus salivarius), this protein is Small ribosomal subunit protein uS9.